An 80-amino-acid polypeptide reads, in one-letter code: U19-lycotoxin-Ls1a (80 aa).

The signal sequence occupies residues 1-22 (MSPKVQALIFIVGLITLLAAHA). The propeptide occupies 23-34 (QEELSDNIESER). 4 cysteine pairs are disulfide-bonded: Cys-36-Cys-50, Cys-43-Cys-55, Cys-49-Cys-66, and Cys-57-Cys-64.

Belongs to the neurotoxin 02 (plectoxin) family. 05 (U19-lycotoxin) subfamily. Expressed by the venom gland.

Its subcellular location is the secreted. The chain is U19-lycotoxin-Ls1a from Lycosa singoriensis (Wolf spider).